The sequence spans 931 residues: Isoleucine--tRNA ligase (931 aa).

The 'HIGH' region motif lies at 58 to 68; the sequence is PYANGHLHCGH. Glu559 contributes to the L-isoleucyl-5'-AMP binding site. The short motif at 600–604 is the 'KMSKS' region element; sequence KLSKS. Position 603 (Lys603) interacts with ATP. Zn(2+) is bound by residues Cys894, Cys897, Cys914, and Cys917.

Belongs to the class-I aminoacyl-tRNA synthetase family. IleS type 1 subfamily. In terms of assembly, monomer. It depends on Zn(2+) as a cofactor.

Its subcellular location is the cytoplasm. The enzyme catalyses tRNA(Ile) + L-isoleucine + ATP = L-isoleucyl-tRNA(Ile) + AMP + diphosphate. Functionally, catalyzes the attachment of isoleucine to tRNA(Ile). As IleRS can inadvertently accommodate and process structurally similar amino acids such as valine, to avoid such errors it has two additional distinct tRNA(Ile)-dependent editing activities. One activity is designated as 'pretransfer' editing and involves the hydrolysis of activated Val-AMP. The other activity is designated 'posttransfer' editing and involves deacylation of mischarged Val-tRNA(Ile). This Legionella pneumophila (strain Corby) protein is Isoleucine--tRNA ligase.